The primary structure comprises 336 residues: PHD finger protein 11 (336 aa).

The segment at 1 to 20 is disordered; it reads MAEETAPPCGPVSTGGSLSP. The segment at 25–61 adopts a C2HC pre-PHD-type zinc-finger fold; that stretch reads KRTCALCPDGHEWSVIYFAPSANIAAHENCLLYSSGL. The segment at 91-143 adopts a PHD-type zinc-finger fold; the sequence is LKCSLCNKGGATVGCDLSSCRKSYHYVCAKKDHAIPQVDEDLGTYKIFCPEHP. Disordered regions lie at residues 139–179 and 303–336; these read CPEH…KKMK and DPSG…GDSL. The segment covering 303–314 has biased composition (low complexity); the sequence is DPSGSTSGSLLP.

Interacts with BRCA1 and RELA.

The protein localises to the nucleus. In terms of biological role, positive regulator of Th1-type cytokine gene expression. In Rattus norvegicus (Rat), this protein is PHD finger protein 11 (Phf11).